The sequence spans 206 residues: Proteasome subunit beta 1 (206 aa).

Positions 1 to 14 are cleaved as a propeptide — removed in mature form; by autocatalysis; that stretch reads MSRIHNDPKVLLTG. The Nucleophile role is filled by Thr15.

It belongs to the peptidase T1B family. As to quaternary structure, the 20S proteasome core is composed of 14 alpha and 14 beta subunits that assemble into four stacked heptameric rings, resulting in a barrel-shaped structure. The two inner rings, each composed of seven catalytic beta subunits, are sandwiched by two outer rings, each composed of seven alpha subunits. The catalytic chamber with the active sites is on the inside of the barrel. Has a gated structure, the ends of the cylinder being occluded by the N-termini of the alpha-subunits. Is capped at one or both ends by the proteasome regulatory ATPase, PAN.

The protein localises to the cytoplasm. The catalysed reaction is Cleavage of peptide bonds with very broad specificity.. Its activity is regulated as follows. The formation of the proteasomal ATPase PAN-20S proteasome complex, via the docking of the C-termini of PAN into the intersubunit pockets in the alpha-rings, triggers opening of the gate for substrate entry. Interconversion between the open-gate and close-gate conformations leads to a dynamic regulation of the 20S proteasome proteolysis activity. In terms of biological role, component of the proteasome core, a large protease complex with broad specificity involved in protein degradation. The polypeptide is Proteasome subunit beta 1 (Caldivirga maquilingensis (strain ATCC 700844 / DSM 13496 / JCM 10307 / IC-167)).